The following is a 155-amino-acid chain: Rhombotin-1 (155 aa).

LIM zinc-binding domains are found at residues 21–83 (KGCA…LFGT) and 85–147 (GNCA…GQLN).

The protein resides in the nucleus. May be involved in gene regulation within neural lineage cells potentially by direct DNA binding or by binding to other transcription factors. This is Rhombotin-1 from Danio rerio (Zebrafish).